Reading from the N-terminus, the 88-residue chain is Small ribosomal subunit protein uS15 (88 aa).

Belongs to the universal ribosomal protein uS15 family. Part of the 30S ribosomal subunit. Forms a bridge to the 50S subunit in the 70S ribosome, contacting the 23S rRNA.

Functionally, one of the primary rRNA binding proteins, it binds directly to 16S rRNA where it helps nucleate assembly of the platform of the 30S subunit by binding and bridging several RNA helices of the 16S rRNA. Its function is as follows. Forms an intersubunit bridge (bridge B4) with the 23S rRNA of the 50S subunit in the ribosome. This is Small ribosomal subunit protein uS15 from Leptospira borgpetersenii serovar Hardjo-bovis (strain JB197).